Consider the following 197-residue polypeptide: ATP-dependent Clp protease proteolytic subunit (197 aa).

Residue Ser97 is the Nucleophile of the active site. His122 is a catalytic residue.

Belongs to the peptidase S14 family. In terms of assembly, fourteen ClpP subunits assemble into 2 heptameric rings which stack back to back to give a disk-like structure with a central cavity, resembling the structure of eukaryotic proteasomes.

It is found in the cytoplasm. The enzyme catalyses Hydrolysis of proteins to small peptides in the presence of ATP and magnesium. alpha-casein is the usual test substrate. In the absence of ATP, only oligopeptides shorter than five residues are hydrolyzed (such as succinyl-Leu-Tyr-|-NHMec, and Leu-Tyr-Leu-|-Tyr-Trp, in which cleavage of the -Tyr-|-Leu- and -Tyr-|-Trp bonds also occurs).. Cleaves peptides in various proteins in a process that requires ATP hydrolysis. Has a chymotrypsin-like activity. Plays a major role in the degradation of misfolded proteins. This Trichlorobacter lovleyi (strain ATCC BAA-1151 / DSM 17278 / SZ) (Geobacter lovleyi) protein is ATP-dependent Clp protease proteolytic subunit.